The chain runs to 541 residues: MAGTVDAQEHVAKPRRPNIFRVLRRTGYGKCLVCSLLLILCFFYATFCHVKHEAYSGSQPLLIYQHGPCAQGYNFVPIVFGLMLYIVYLMECWHSRTKIINMKKVRVEDALDYITALRTSPPIVWWKSVCYHYTRKTRQVTRYRNGDAVSATQVYYERMNSHQAGSMFIYDTCGFRDISKSILEVEKFHVTRIRLSRSFVFANMQAATEFEQQRSRFFNDNETKDDYMEVREGMDLSDVGFVEEILAFNKPTPPWFLHPIVFWFFSIFVLSWPLRIYTEWRTAVLSFQVIKLFGTNYLSPNSVNYTGPLTRTSTMDTVELEALLRREQHFVVPSYSEVMLMQNTIANSNTNYPNIRCLDPVILPRPFVSTTNEHIVLRNYGATETDNSLSEPITATPRPLRVSRSMTFAAQGNLEESAENLSCLENGSRANRAIPSSRRNLPLRSLSIGGISAWSNGYREIGNPDDSQLLIEPDEPPPPYEVALRMCAPLYERLRRSISSRLASISHSSSKDLKSLTLKSSSSNNNNNNSNNNNNDDPEHP.

3 helical membrane-spanning segments follow: residues 27–47, 73–93, and 254–274; these read GYGK…YATF, YNFV…MECW, and PWFL…SWPL. The interval 503 to 541 is disordered; sequence ASISHSSSKDLKSLTLKSSSSNNNNNNSNNNNNDDPEHP. The segment covering 515-535 has biased composition (low complexity); sequence SLTLKSSSSNNNNNNSNNNNN.

The protein belongs to the TMEM151 family.

The protein resides in the membrane. This chain is Transmembrane protein 151 homolog, found in Caenorhabditis elegans.